A 144-amino-acid polypeptide reads, in one-letter code: Large ribosomal subunit protein uL16 (144 aa).

It belongs to the universal ribosomal protein uL16 family. Part of the 50S ribosomal subunit.

Its function is as follows. Binds 23S rRNA and is also seen to make contacts with the A and possibly P site tRNAs. The polypeptide is Large ribosomal subunit protein uL16 (Lysinibacillus sphaericus (strain C3-41)).